Here is a 250-residue protein sequence, read N- to C-terminus: Malonyl-[acyl-carrier protein] O-methyltransferase (250 aa).

Belongs to the methyltransferase superfamily.

It catalyses the reaction malonyl-[ACP] + S-adenosyl-L-methionine = malonyl-[ACP] methyl ester + S-adenosyl-L-homocysteine. It participates in cofactor biosynthesis; biotin biosynthesis. Functionally, converts the free carboxyl group of a malonyl-thioester to its methyl ester by transfer of a methyl group from S-adenosyl-L-methionine (SAM). It allows to synthesize pimeloyl-ACP via the fatty acid synthetic pathway. This Neorickettsia risticii (strain Illinois) protein is Malonyl-[acyl-carrier protein] O-methyltransferase.